The sequence spans 172 residues: Large ribosomal subunit protein uL10 (172 aa).

It belongs to the universal ribosomal protein uL10 family. In terms of assembly, part of the ribosomal stalk of the 50S ribosomal subunit. The N-terminus interacts with L11 and the large rRNA to form the base of the stalk. The C-terminus forms an elongated spine to which L12 dimers bind in a sequential fashion forming a multimeric L10(L12)X complex.

Its function is as follows. Forms part of the ribosomal stalk, playing a central role in the interaction of the ribosome with GTP-bound translation factors. The protein is Large ribosomal subunit protein uL10 of Chlamydia trachomatis serovar L2 (strain ATCC VR-902B / DSM 19102 / 434/Bu).